The chain runs to 157 residues: S-ribosylhomocysteine lyase (157 aa).

Residues His54, His58, and Cys124 each contribute to the Fe cation site.

This sequence belongs to the LuxS family. Homodimer. Fe cation is required as a cofactor.

The catalysed reaction is S-(5-deoxy-D-ribos-5-yl)-L-homocysteine = (S)-4,5-dihydroxypentane-2,3-dione + L-homocysteine. In terms of biological role, involved in the synthesis of autoinducer 2 (AI-2) which is secreted by bacteria and is used to communicate both the cell density and the metabolic potential of the environment. The regulation of gene expression in response to changes in cell density is called quorum sensing. Catalyzes the transformation of S-ribosylhomocysteine (RHC) to homocysteine (HC) and 4,5-dihydroxy-2,3-pentadione (DPD). This Levilactobacillus brevis (strain ATCC 367 / BCRC 12310 / CIP 105137 / JCM 1170 / LMG 11437 / NCIMB 947 / NCTC 947) (Lactobacillus brevis) protein is S-ribosylhomocysteine lyase.